Consider the following 130-residue polypeptide: Small ribosomal subunit protein uS11c (130 aa).

Belongs to the universal ribosomal protein uS11 family. In terms of assembly, part of the 30S ribosomal subunit.

The protein resides in the plastid. The protein localises to the chloroplast. This Pinus koraiensis (Korean pine) protein is Small ribosomal subunit protein uS11c.